A 100-amino-acid polypeptide reads, in one-letter code: Small ribosomal subunit protein uS14c (100 aa).

This sequence belongs to the universal ribosomal protein uS14 family. As to quaternary structure, part of the 30S ribosomal subunit.

Its subcellular location is the plastid. It is found in the chloroplast. In terms of biological role, binds 16S rRNA, required for the assembly of 30S particles. This Buxus microphylla (Littleleaf boxwood) protein is Small ribosomal subunit protein uS14c.